Here is a 907-residue protein sequence, read N- to C-terminus: Whirlin (907 aa).

A PDZ 1 domain is found at 140–223 (LVSLRRAKAH…LVLSVYSAGR (84 aa)). Residues 243–264 (SISPPSGLPQPHGGALRQQEGD) form a disordered region. In terms of domain architecture, PDZ 2 spans 279–361 (KVNLVLGDGR…LILTVKDVGR (83 aa)). Disordered stretches follow at residues 502-540 (SMKA…TVSS), 565-663 (SVDD…SSKR), 684-717 (QSPP…QTGT), and 742-815 (PQTR…PTST). The span at 521-540 (SYSDTGSSTGSHGTSTTVSS) shows a compositional bias: low complexity. Residues 609–626 (PPSSMPSCSGTVFSAPQN) show a composition bias toward polar residues. A compositionally biased stretch (low complexity) spans 628-642 (SPPAGTAPTPGTSSA). Position 685 is a phosphoserine (serine 685). Residues 743 to 762 (QTRTASTLSQLSDSGQTLSE) show a composition bias toward polar residues. A compositionally biased stretch (basic and acidic residues) spans 789 to 800 (SSKELPRNERPT). Residues 816 to 899 (LVRVKKSAAT…TKDRDYIDFL (84 aa)) form the PDZ 3 domain.

As to quaternary structure, forms homooligomers. Interacts (via C-terminal PDZ domain) with MYO15A; this interaction is necessary for localization of WHRN to stereocilia tips. Interacts (via C-terminal PDZ domain) with MPP1/p55. Interacts with LRRC4C/NGL1. Interacts with MYO7A. Interacts with RPGR. Interacts with EPS8. Interacts with CASK. Interacts with CIB2. Component of USH2 complex, composed of ADGRV1, PDZD7, USH2A and WHRN. Interacts (via PDZ domains) with PDZD7; the interaction is direct. Interacts (via N-terminal PDZ domain) with USH2A (via cytoplasmic region). Interacts with ADGRV1/MASS1 (via cytoplasmic region).

It is found in the cytoplasm. It localises to the cell projection. Its subcellular location is the stereocilium. The protein localises to the growth cone. The protein resides in the photoreceptor inner segment. It is found in the synapse. In terms of biological role, involved in hearing and vision as member of the USH2 complex. Necessary for elongation and maintenance of inner and outer hair cell stereocilia in the organ of Corti in the inner ear. Involved in the maintenance of the hair bundle ankle region, which connects stereocilia in cochlear hair cells of the inner ear. In retina photoreceptors, required for the maintenance of periciliary membrane complex that seems to play a role in regulating intracellular protein transport. The polypeptide is Whirlin (Homo sapiens (Human)).